The chain runs to 362 residues: Phosphoserine aminotransferase (362 aa).

Positions 9 and 42 each coordinate L-glutamate. Pyridoxal 5'-phosphate-binding positions include 76–77 (GR), tryptophan 102, threonine 153, aspartate 174, and glutamine 197. Lysine 198 bears the N6-(pyridoxal phosphate)lysine mark. 239-240 (NT) is a pyridoxal 5'-phosphate binding site.

The protein belongs to the class-V pyridoxal-phosphate-dependent aminotransferase family. SerC subfamily. As to quaternary structure, homodimer. Pyridoxal 5'-phosphate is required as a cofactor.

The protein resides in the cytoplasm. It carries out the reaction O-phospho-L-serine + 2-oxoglutarate = 3-phosphooxypyruvate + L-glutamate. It catalyses the reaction 4-(phosphooxy)-L-threonine + 2-oxoglutarate = (R)-3-hydroxy-2-oxo-4-phosphooxybutanoate + L-glutamate. The protein operates within amino-acid biosynthesis; L-serine biosynthesis; L-serine from 3-phospho-D-glycerate: step 2/3. Its pathway is cofactor biosynthesis; pyridoxine 5'-phosphate biosynthesis; pyridoxine 5'-phosphate from D-erythrose 4-phosphate: step 3/5. Catalyzes the reversible conversion of 3-phosphohydroxypyruvate to phosphoserine and of 3-hydroxy-2-oxo-4-phosphonooxybutanoate to phosphohydroxythreonine. This chain is Phosphoserine aminotransferase, found in Escherichia coli O127:H6 (strain E2348/69 / EPEC).